Here is a 277-residue protein sequence, read N- to C-terminus: Putative phosphoenolpyruvate synthase regulatory protein (277 aa).

157 to 164 (GVSRCGKT) is an ADP binding site.

It belongs to the pyruvate, phosphate/water dikinase regulatory protein family. PSRP subfamily.

The enzyme catalyses [pyruvate, water dikinase] + ADP = [pyruvate, water dikinase]-phosphate + AMP + H(+). The catalysed reaction is [pyruvate, water dikinase]-phosphate + phosphate + H(+) = [pyruvate, water dikinase] + diphosphate. In terms of biological role, bifunctional serine/threonine kinase and phosphorylase involved in the regulation of the phosphoenolpyruvate synthase (PEPS) by catalyzing its phosphorylation/dephosphorylation. This is Putative phosphoenolpyruvate synthase regulatory protein from Citrobacter koseri (strain ATCC BAA-895 / CDC 4225-83 / SGSC4696).